The following is a 603-amino-acid chain: DNA mismatch repair protein MutL (603 aa).

It belongs to the DNA mismatch repair MutL/HexB family.

Functionally, this protein is involved in the repair of mismatches in DNA. It is required for dam-dependent methyl-directed DNA mismatch repair. May act as a 'molecular matchmaker', a protein that promotes the formation of a stable complex between two or more DNA-binding proteins in an ATP-dependent manner without itself being part of a final effector complex. The protein is DNA mismatch repair protein MutL of Nitrobacter hamburgensis (strain DSM 10229 / NCIMB 13809 / X14).